Here is a 210-residue protein sequence, read N- to C-terminus: Cell division protein SepF (210 aa).

It belongs to the SepF family. In terms of assembly, homodimer. Interacts with FtsZ.

It localises to the cytoplasm. Cell division protein that is part of the divisome complex and is recruited early to the Z-ring. Probably stimulates Z-ring formation, perhaps through the cross-linking of FtsZ protofilaments. Its function overlaps with FtsA. The protein is Cell division protein SepF of Mycobacterium leprae (strain Br4923).